Reading from the N-terminus, the 317-residue chain is Acetyl-coenzyme A carboxylase carboxyl transferase subunit alpha (317 aa).

In terms of domain architecture, CoA carboxyltransferase C-terminal spans 33–294; that stretch reads NLDDEIARLQ…KQRLLDDLKE (262 aa).

This sequence belongs to the AccA family. Acetyl-CoA carboxylase is a heterohexamer composed of biotin carboxyl carrier protein (AccB), biotin carboxylase (AccC) and two subunits each of ACCase subunit alpha (AccA) and ACCase subunit beta (AccD).

The protein resides in the cytoplasm. It catalyses the reaction N(6)-carboxybiotinyl-L-lysyl-[protein] + acetyl-CoA = N(6)-biotinyl-L-lysyl-[protein] + malonyl-CoA. Its pathway is lipid metabolism; malonyl-CoA biosynthesis; malonyl-CoA from acetyl-CoA: step 1/1. Its function is as follows. Component of the acetyl coenzyme A carboxylase (ACC) complex. First, biotin carboxylase catalyzes the carboxylation of biotin on its carrier protein (BCCP) and then the CO(2) group is transferred by the carboxyltransferase to acetyl-CoA to form malonyl-CoA. The polypeptide is Acetyl-coenzyme A carboxylase carboxyl transferase subunit alpha (Pasteurella multocida (strain Pm70)).